Consider the following 1043-residue polypeptide: Isoleucine--tRNA ligase (1043 aa).

The 'HIGH' region motif lies at 48-58; sequence PFATGLPHYGH. The 'KMSKS' region signature appears at 591–595; sequence KMSKR. Lys-594 is an ATP binding site.

This sequence belongs to the class-I aminoacyl-tRNA synthetase family. IleS type 2 subfamily. In terms of assembly, monomer. Zn(2+) is required as a cofactor.

The protein resides in the cytoplasm. The catalysed reaction is tRNA(Ile) + L-isoleucine + ATP = L-isoleucyl-tRNA(Ile) + AMP + diphosphate. Its function is as follows. Catalyzes the attachment of isoleucine to tRNA(Ile). As IleRS can inadvertently accommodate and process structurally similar amino acids such as valine, to avoid such errors it has two additional distinct tRNA(Ile)-dependent editing activities. One activity is designated as 'pretransfer' editing and involves the hydrolysis of activated Val-AMP. The other activity is designated 'posttransfer' editing and involves deacylation of mischarged Val-tRNA(Ile). In Chlamydia pneumoniae (Chlamydophila pneumoniae), this protein is Isoleucine--tRNA ligase.